A 147-amino-acid chain; its full sequence is Ribosome maturation factor RimP (147 aa).

This sequence belongs to the RimP family.

It is found in the cytoplasm. Functionally, required for maturation of 30S ribosomal subunits. The sequence is that of Ribosome maturation factor RimP from Legionella pneumophila (strain Paris).